We begin with the raw amino-acid sequence, 242 residues long: Uridylate kinase (242 aa).

Residue 11–14 coordinates ATP; the sequence is KLSG. The segment at 19–24 is involved in allosteric activation by GTP; sequence GDKGVG. Gly-53 is a binding site for UMP. Residues Gly-54 and Arg-58 each contribute to the ATP site. UMP contacts are provided by residues Asp-73 and 134 to 141; that span reads IGSPYFST. ATP is bound by residues Asn-162, Tyr-168, and Asp-171.

It belongs to the UMP kinase family. As to quaternary structure, homohexamer.

It localises to the cytoplasm. The enzyme catalyses UMP + ATP = UDP + ADP. It functions in the pathway pyrimidine metabolism; CTP biosynthesis via de novo pathway; UDP from UMP (UMPK route): step 1/1. Allosterically activated by GTP. Inhibited by UTP. Its function is as follows. Catalyzes the reversible phosphorylation of UMP to UDP. This chain is Uridylate kinase, found in Streptococcus agalactiae serotype III (strain NEM316).